The chain runs to 147 residues: Transcriptional repressor NrdR (147 aa).

The segment at 3–34 is a zinc-finger region; it reads CPFCGHLETQVVETRVSEDADFVRRRRQCSAC. The region spanning 49–139 is the ATP-cone domain; the sequence is PVVVKKDGSR…VYRSFEDVDE (91 aa).

Belongs to the NrdR family. The cofactor is Zn(2+).

Negatively regulates transcription of bacterial ribonucleotide reductase nrd genes and operons by binding to NrdR-boxes. The protein is Transcriptional repressor NrdR of Variovorax paradoxus (strain S110).